The sequence spans 978 residues: Calsyntenin-1 (978 aa).

A signal peptide spans 1 to 26 (MTFHKTFGYGCIVLICFELLFAGVET). Topologically, residues 27-876 (SSENDDEYLT…SFIHKAEGSH (850 aa)) are extracellular. 2 Cadherin domains span residues 37–143 (QKEI…APTF) and 144–249 (LEPS…MPER). An N-linked (GlcNAc...) asparagine glycan is attached at N53. N-linked (GlcNAc...) asparagine glycans are attached at residues N304, N486, N608, and N823. The helical transmembrane segment at 877–897 (VTMLIILVSVFLAVLLCGVSI) threads the bilayer. The Cytoplasmic segment spans residues 898 to 978 (ARLKNNQKYI…EWDNSNIFQQ (81 aa)). The interval 937–958 (ADVTSDASSESENSESEDEEAL) is disordered. Residues 948-957 (ENSESEDEEA) are compositionally biased toward acidic residues.

This sequence belongs to the calsyntenin family.

It is found in the postsynaptic cell membrane. Functionally, postsynaptic adhesion molecule that binds to presynaptic neurexins to mediate both excitatory and inhibitory synapse formation. Promotes synapse development by acting as a cell adhesion molecule at the postsynaptic membrane, which associates with neurexin-alpha at the presynaptic membrane. This is Calsyntenin-1 (Cals) from Drosophila melanogaster (Fruit fly).